Reading from the N-terminus, the 1423-residue chain is MVAVDSTFPSHGSSYSSRRKKVSALEPNYFGSMCMGVYSDDVSISAREVAQDYSCDSCGDLATVSSACCNFDELCGLDSALEMGCRSNEDCRAGQEASGSGIASGLDKSVPGYTMYASGWMYGNQQGQMCGPYTQQQLYDGLSTNFLPEDLLVYPIINGYTANSVPLKYFKQFPDHVATGFAYLQNGIISVAPSVTSFPPSSSNATVHQDEIQTEHATSATHLISHQTMPPQTSSNGSVLDQLTLNHEESNMLASFLSLGNEHACWFLVDGEGRNHGPHSILELFSWQQHGYVSDAALIRDGENKLRPITLASLIGVWRVKCGDANCDEPVTGVNFISEVSEELSVHLQSGIMKIARRALLDEIISSVISDFLKAKKSDEHLKSYPPTSAVESISSRVINAEKSVVSNTESAGCKNTMNEGGHSSIAAESSKYTKSVGSIENFQTSCSAVCRTLHHHCMQIMWNAVFYDTVATHSSCWRKNKIWFRSSDISTVNYCKGSHTKYSDKPESFESFTCRVDSSSSKTAYSDEFDLATNGARVRGLSSDTYGTESVIASISEHVENELFLSLKTHLTDYTSILIKDGANNTTSSARDGKMHEGSFREQYNLEGSSKKKNGLNVVPAKLRFSNDFSDSQRLLQEGESSEQITSEDIIANIFSTALETSDIPVNDELDALAIHEPPPPGCESNINMPCLRYKYQPVRSKESIPEIKAYVSMALCRQKLHNDVMRDWKSLFLKCYLNEFLASLKGSHQVSRKETLALKKRKTVTRNKKLVQSNISNQTAEKLRKPCVGASEKVLVKRSKKLSDSHSMKEVLKVDTPSIDLSVRKPSQQKMRNTDRRDHCIIKDATKLHKEKVGKDAFSKVICDKSQDLEMEDEFDDALLITRLRRISRNKTKELRECRNAAKSCEEISVTAEESEETVDCKDHEESLSNKPSQKVKKAHTSKLKRKNLSDARDEGTKSCNGAVKSFTEISGKEGDTESLGLAISDKVSHQNLSKRRKSKIALFLFPGFENTSRKCFTKLLSPEDAAKNGQDMSNPTGNPPRLAEGKKFVEKSACSISQKGRKSSQSSILKRKHQLDEKISNVPSRRRLSLSSTDSEDAVIKEDYDVRNEEKLPCHTSDKLQKGPNKLIRRRKPLAKHTTERSPIKDLSVDDGRPKPIALKPLEKLSSKPSKKKLFLSIPKSDGCARTSINGWHWHAWSLKASAEERARVRGSSCVHMQHFGSKSSLTQNVLSARTNRAKLRNLLAAADGADVLKMSQLKARKKHLRFQQSKIHDWGLVALEPIEAEDFVIEYVGELIRSSISEIRERQYEKMGIGSSYLFRLDDGYVLDATKRGGIARFINHSCEPNCYTKIISVEGKKKIFIYAKRHIDAGEEISYNYKFPLEDDKIPCNCGAPNVYCFCEQVPWIAKLKRRTWFSRRN.

A GYF domain is found at 263 to 312 (HACWFLVDGEGRNHGPHSILELFSWQQHGYVSDAALIRDGENKLRPITLA). Disordered regions lie at residues 923-960 (CKDH…EGTK), 1057-1097 (CSIS…SSTD), and 1115-1158 (LPCH…GRPK). Positions 936–949 (QKVKKAHTSKLKRK) are enriched in basic residues. The span at 950-959 (NLSDARDEGT) shows a compositional bias: basic and acidic residues. The span at 1057-1071 (CSISQKGRKSSQSSI) shows a compositional bias: polar residues. Composition is skewed to basic and acidic residues over residues 1115–1124 (LPCHTSDKLQ) and 1140–1157 (HTTE…DGRP). In terms of domain architecture, SET spans 1266-1383 (KHLRFQQSKI…AGEEISYNYK (118 aa)). Residue tyrosine 1382 coordinates S-adenosyl-L-methionine.

Belongs to the class V-like SAM-binding methyltransferase superfamily. Histone-lysine methyltransferase family. TRX/MLL subfamily. As to expression, expressed in the shoot and root apices, vascular tissues and mesophyll cells of rosette leaves.

The protein localises to the nucleus. The enzyme catalyses L-lysyl(4)-[histone H3] + 3 S-adenosyl-L-methionine = N(6),N(6),N(6)-trimethyl-L-lysyl(4)-[histone H3] + 3 S-adenosyl-L-homocysteine + 3 H(+). The catalysed reaction is L-lysyl(36)-[histone H3] + 2 S-adenosyl-L-methionine = N(6),N(6)-dimethyl-L-lysyl(36)-[histone H3] + 2 S-adenosyl-L-homocysteine + 2 H(+). Its function is as follows. Histone methyltransferase involved in regulation of flowering time. Required for the expression of the flowering repressors FLC and MADS-box genes of the MAF family. Required for histone H3 dimethylation on 'Lys-36' H3K36me2 at the FLC locus. Required for histone H3 trimethylation on 'Lys-4' (H3K4me3) at the FLC locus. Prevents trimethylation on 'Lys-27' (H3K27me3) at the same locus. Involved in the control of seed dormancy and germination. The chain is Histone-lysine N-methyltransferase ATXR7 from Arabidopsis thaliana (Mouse-ear cress).